The sequence spans 244 residues: 5-oxoprolinase subunit A (244 aa).

This sequence belongs to the LamB/PxpA family. Forms a complex composed of PxpA, PxpB and PxpC.

The enzyme catalyses 5-oxo-L-proline + ATP + 2 H2O = L-glutamate + ADP + phosphate + H(+). Catalyzes the cleavage of 5-oxoproline to form L-glutamate coupled to the hydrolysis of ATP to ADP and inorganic phosphate. The protein is 5-oxoprolinase subunit A of Salmonella typhimurium (strain LT2 / SGSC1412 / ATCC 700720).